Here is a 421-residue protein sequence, read N- to C-terminus: MGQTFAEQILGHASGRSDVQAGDMVVVNVDLVMMHDSLSPSIIETLHNELGAERVWDRDKVAVVIDHVAPAATVRQAEQQQQVRRWVAQQGISHLFDVGRGISHPVLIEEGLVQPGMLVVGSDSHSTGYGAAAAFGSGMGTTDIALALATGQTWFRVPETVRVNAVGNFQPGVSVKDFGLWAARTLRADGATYQSVEWHGVDFLSWRERMTLATLSIEVGAKAGIVAPTGLGAEHPVPEWLRVEADASYSRVVECDLSTLEPQVSVPHYVDNVVDLADVGRVAVDVVYLGTCTNGHYEDMAAAASILKGRRLAPNVRMIVVPASSESLHRAASDGTLATLLAAGATIGTPGCGACIGRHMGVLAPDEVCVFTGNRNFRGRMGSPGANIYLASPEVAAATAVTGYITHPRNVLDSTEQAVFA.

Positions 292, 352, and 355 each coordinate [4Fe-4S] cluster.

It belongs to the aconitase/IPM isomerase family. LeuC type 2 subfamily. As to quaternary structure, heterodimer of LeuC and LeuD. Requires [4Fe-4S] cluster as cofactor.

It catalyses the reaction (2R,3S)-3-isopropylmalate = (2S)-2-isopropylmalate. It participates in amino-acid biosynthesis; L-leucine biosynthesis; L-leucine from 3-methyl-2-oxobutanoate: step 2/4. In terms of biological role, catalyzes the isomerization between 2-isopropylmalate and 3-isopropylmalate, via the formation of 2-isopropylmaleate. The chain is 3-isopropylmalate dehydratase large subunit from Herpetosiphon aurantiacus (strain ATCC 23779 / DSM 785 / 114-95).